A 715-amino-acid polypeptide reads, in one-letter code: SANT and BTB domain regulator of class switch recombination (715 aa).

In terms of domain architecture, SANT spans 21–59 (DMILCSLVGVPQPISWDSVARLVPGYTPKECAKRFEELK). The BTB domain maps to 146–254 (MVIHVCDEAK…ECIRYCHKNM (109 aa)). The span at 552-573 (SEEEDYTTGSEVTEDEVGDEEE) shows a compositional bias: acidic residues. 2 disordered regions span residues 552–623 (SEEE…VSLQ) and 689–715 (SAHS…GRPT). The span at 578-605 (QAGRKVKPKRSAKQTKKHISSPSIHKKE) shows a compositional bias: basic residues. 2 stretches are compositionally biased toward polar residues: residues 614–623 (DSSPFTVSLQ) and 690–699 (AHSNTRQMNT).

The protein belongs to the KIAA1841 family. Homodimer.

Negatively regulates class switch recombination or isotype switching in splenic B-cells. This Xenopus laevis (African clawed frog) protein is SANT and BTB domain regulator of class switch recombination.